A 471-amino-acid chain; its full sequence is tRNA-2-methylthio-N(6)-dimethylallyladenosine synthase (471 aa).

Residues 31–149 (LYYHIETYGC…FPQLLWEALN (119 aa)) form the MTTase N-terminal domain. [4Fe-4S] cluster-binding residues include C40, C76, C110, C186, C190, and C193. In terms of domain architecture, Radical SAM core spans 172–402 (RDSNLKAWVN…IELQNKISLE (231 aa)). In terms of domain architecture, TRAM spans 405 to 468 (AELRGKIVEV…AWTMQGELVE (64 aa)).

This sequence belongs to the methylthiotransferase family. MiaB subfamily. As to quaternary structure, monomer. [4Fe-4S] cluster is required as a cofactor.

It is found in the cytoplasm. The enzyme catalyses N(6)-dimethylallyladenosine(37) in tRNA + (sulfur carrier)-SH + AH2 + 2 S-adenosyl-L-methionine = 2-methylsulfanyl-N(6)-dimethylallyladenosine(37) in tRNA + (sulfur carrier)-H + 5'-deoxyadenosine + L-methionine + A + S-adenosyl-L-homocysteine + 2 H(+). Functionally, catalyzes the methylthiolation of N6-(dimethylallyl)adenosine (i(6)A), leading to the formation of 2-methylthio-N6-(dimethylallyl)adenosine (ms(2)i(6)A) at position 37 in tRNAs that read codons beginning with uridine. This is tRNA-2-methylthio-N(6)-dimethylallyladenosine synthase from Thermoanaerobacter sp. (strain X514).